Consider the following 355-residue polypeptide: Uroporphyrinogen decarboxylase (355 aa).

Residues 27–31 (RQAGR), Asp-77, Tyr-154, Thr-209, and His-327 contribute to the substrate site.

This sequence belongs to the uroporphyrinogen decarboxylase family. In terms of assembly, homodimer.

It is found in the cytoplasm. The catalysed reaction is uroporphyrinogen III + 4 H(+) = coproporphyrinogen III + 4 CO2. It participates in porphyrin-containing compound metabolism; protoporphyrin-IX biosynthesis; coproporphyrinogen-III from 5-aminolevulinate: step 4/4. Functionally, catalyzes the decarboxylation of four acetate groups of uroporphyrinogen-III to yield coproporphyrinogen-III. The polypeptide is Uroporphyrinogen decarboxylase (Yersinia pestis bv. Antiqua (strain Antiqua)).